The chain runs to 83 residues: Weak toxin DE-1 (83 aa).

Positions 1–21 (MKTLLLTLVVVTIVCLDLGYS) are cleaved as a signal peptide. Intrachain disulfides connect Cys24-Cys45, Cys38-Cys62, Cys64-Cys75, and Cys76-Cys81.

It belongs to the three-finger toxin family. Short-chain subfamily. Type I alpha-neurotoxin sub-subfamily. Expressed by the venom gland.

Its subcellular location is the secreted. The sequence is that of Weak toxin DE-1 from Ophiophagus hannah (King cobra).